Here is a 307-residue protein sequence, read N- to C-terminus: uncharacterized protein (307 aa).

The protein to B.burgdorferi BB0340.

This is an uncharacterized protein from Treponema pallidum (strain Nichols).